The primary structure comprises 269 residues: MTIVSGHIGKHPSLTTVQAGSSASVENQMPDPAQFSDGRWKKLPTQLSSITLARFDQNICTNNHGISQRAMCFGLSLSWINMIHAGKDHVTPYASAERMRFLGSFEGVVHARTVHNFYRTEHKFLMEQASANPGVSSGAMAGTESLLQAAELKGLKLQPVLEDKSNSGLPFLIACKQSGRQVSTDEAALSSLCDAIVENKRGVMVIYSQEIAHALGFSVSSDGKRATLFDPNLGEFHTHSKALADTIENISSADGLPLIGVQVFASKIH.

A disordered region spans residues 1–39 (MTIVSGHIGKHPSLTTVQAGSSASVENQMPDPAQFSDGR). Residues 13 to 27 (SLTTVQAGSSASVEN) show a composition bias toward polar residues. Catalysis depends on residues C72, H213, and D230.

This sequence belongs to the peptidase C58 family.

Its function is as follows. Potential cysteine protease. Avirulence protein, which may be essential during infection of plant cells from Pea and some Arabidopsis thaliana cultivars. May act by affecting the plant defense system. In plants lacking appropriate resistance (R) gene, it probably impairs the plant defense system and leads to the bacteria multiplication. In contrast, in plants containing the appropriate R protein, it is unable to induce disease symptoms, explaining its avirulence name. This chain is Probable cysteine protease avirulence protein AvrPpiC2 (avrPpiC2), found in Pseudomonas syringae pv. pisi.